The primary structure comprises 371 residues: UDP-N-acetylglucosamine--N-acetylmuramyl-(pentapeptide) pyrophosphoryl-undecaprenol N-acetylglucosamine transferase (371 aa).

UDP-N-acetyl-alpha-D-glucosamine contacts are provided by residues 15–17, Asn126, Arg172, Ser199, Ile256, 275–280, and Gln301; these read TGG and ALTVSE.

Belongs to the glycosyltransferase 28 family. MurG subfamily.

It is found in the cell inner membrane. The catalysed reaction is di-trans,octa-cis-undecaprenyl diphospho-N-acetyl-alpha-D-muramoyl-L-alanyl-D-glutamyl-meso-2,6-diaminopimeloyl-D-alanyl-D-alanine + UDP-N-acetyl-alpha-D-glucosamine = di-trans,octa-cis-undecaprenyl diphospho-[N-acetyl-alpha-D-glucosaminyl-(1-&gt;4)]-N-acetyl-alpha-D-muramoyl-L-alanyl-D-glutamyl-meso-2,6-diaminopimeloyl-D-alanyl-D-alanine + UDP + H(+). Its pathway is cell wall biogenesis; peptidoglycan biosynthesis. Functionally, cell wall formation. Catalyzes the transfer of a GlcNAc subunit on undecaprenyl-pyrophosphoryl-MurNAc-pentapeptide (lipid intermediate I) to form undecaprenyl-pyrophosphoryl-MurNAc-(pentapeptide)GlcNAc (lipid intermediate II). In Francisella tularensis subsp. holarctica (strain FTNF002-00 / FTA), this protein is UDP-N-acetylglucosamine--N-acetylmuramyl-(pentapeptide) pyrophosphoryl-undecaprenol N-acetylglucosamine transferase.